The following is a 236-amino-acid chain: 2-C-methyl-D-erythritol 4-phosphate cytidylyltransferase (236 aa).

Belongs to the IspD/TarI cytidylyltransferase family. IspD subfamily.

It carries out the reaction 2-C-methyl-D-erythritol 4-phosphate + CTP + H(+) = 4-CDP-2-C-methyl-D-erythritol + diphosphate. It functions in the pathway isoprenoid biosynthesis; isopentenyl diphosphate biosynthesis via DXP pathway; isopentenyl diphosphate from 1-deoxy-D-xylulose 5-phosphate: step 2/6. Its function is as follows. Catalyzes the formation of 4-diphosphocytidyl-2-C-methyl-D-erythritol from CTP and 2-C-methyl-D-erythritol 4-phosphate (MEP). The chain is 2-C-methyl-D-erythritol 4-phosphate cytidylyltransferase from Burkholderia thailandensis (strain ATCC 700388 / DSM 13276 / CCUG 48851 / CIP 106301 / E264).